Here is a 482-residue protein sequence, read N- to C-terminus: Ribosomal RNA small subunit methyltransferase F (482 aa).

S-adenosyl-L-methionine is bound by residues 119 to 125 (ASAPGSK), E143, D170, and D188. Residue C241 is the Nucleophile of the active site.

It belongs to the class I-like SAM-binding methyltransferase superfamily. RsmB/NOP family.

Its subcellular location is the cytoplasm. It carries out the reaction cytidine(1407) in 16S rRNA + S-adenosyl-L-methionine = 5-methylcytidine(1407) in 16S rRNA + S-adenosyl-L-homocysteine + H(+). Functionally, specifically methylates the cytosine at position 1407 (m5C1407) of 16S rRNA. The polypeptide is Ribosomal RNA small subunit methyltransferase F (Shewanella sp. (strain MR-7)).